The chain runs to 288 residues: Bifunctional protein FolD (288 aa).

NADP(+)-binding positions include glycine 166 to serine 168 and isoleucine 232.

It belongs to the tetrahydrofolate dehydrogenase/cyclohydrolase family. Homodimer.

It carries out the reaction (6R)-5,10-methylene-5,6,7,8-tetrahydrofolate + NADP(+) = (6R)-5,10-methenyltetrahydrofolate + NADPH. The enzyme catalyses (6R)-5,10-methenyltetrahydrofolate + H2O = (6R)-10-formyltetrahydrofolate + H(+). The protein operates within one-carbon metabolism; tetrahydrofolate interconversion. Its function is as follows. Catalyzes the oxidation of 5,10-methylenetetrahydrofolate to 5,10-methenyltetrahydrofolate and then the hydrolysis of 5,10-methenyltetrahydrofolate to 10-formyltetrahydrofolate. The polypeptide is Bifunctional protein FolD (Shigella dysenteriae serotype 1 (strain Sd197)).